Reading from the N-terminus, the 236-residue chain is Phosphoserine phosphatase (236 aa).

Residue Asp30 is the Nucleophile of the active site. The Mg(2+) site is built by Asp30 and Asp32. The active-site Proton donor is Asp32. Residues Glu39, Arg76, 120–121, and Lys169 contribute to the substrate site; that span reads SG. Asp192 contacts Mg(2+). Asn195 is a substrate binding site.

Belongs to the HAD-like hydrolase superfamily. SerB family. Mg(2+) is required as a cofactor.

It catalyses the reaction O-phospho-L-serine + H2O = L-serine + phosphate. The enzyme catalyses O-phospho-D-serine + H2O = D-serine + phosphate. The protein operates within amino-acid biosynthesis; L-serine biosynthesis; L-serine from 3-phospho-D-glycerate: step 3/3. The sequence is that of Phosphoserine phosphatase from Polaromonas sp. (strain JS666 / ATCC BAA-500).